We begin with the raw amino-acid sequence, 402 residues long: MSVDIRPTPPAQDSARQNVTLQIVSVVMFTFIGYLTIGIPLAVLPGYVHDDLGYGSVLAGLVISLQYLATLLARPYAGRVIDGLGPKRAVLYGMAGSAASGLFMLLSVAIQGWPALSLASLLVGRLVLGAAESLVGSAAIGWGIGRVGAPHTAKVISWNGIASYGAIALGAPLGVLLVQWLGLWSMGASIVLLGALGFALAWPKLPAPLVHGERLPFHHVLGRVTPHGMGLALGAIGFGTIATFITLYYASRGWANAVLCLSAFGGCFIGARLLFANSINRLGGFRVAIICLGVESLGLLLLWSAPNPWVGLAGAALTGFGFSLVFPAFGVEAVNLVPASNRGAALGAYSLFVDLSLGITGPLVGFVANLFGFRSMFLFACLASLSGLALAIALHRRSRRPG.

12 helical membrane-spanning segments follow: residues 23–43 (IVSVVMFTFIGYLTIGIPLAV), 52–72 (LGYGSVLAGLVISLQYLATLL), 90–110 (VLYGMAGSAASGLFMLLSVAI), 121–141 (LLVGRLVLGAAESLVGSAAIG), 158–178 (WNGIASYGAIALGAPLGVLLV), 180–200 (WLGLWSMGASIVLLGALGFAL), 228–248 (GMGLALGAIGFGTIATFITLY), 255–275 (ANAVLCLSAFGGCFIGARLLF), 282–302 (LGGFRVAIICLGVESLGLLLL), 309–329 (WVGLAGAALTGFGFSLVFPAF), 351–371 (LFVDLSLGITGPLVGFVANLF), and 375–395 (SMFLFACLASLSGLALAIALH).

Belongs to the major facilitator superfamily. YhhS family.

The protein localises to the cell inner membrane. This is an uncharacterized protein from Pseudomonas aeruginosa (strain UCBPP-PA14).